We begin with the raw amino-acid sequence, 235 residues long: Pyridoxine 5'-phosphate synthase (235 aa).

Position 6 (N6) interacts with 3-amino-2-oxopropyl phosphate. 8-9 (DH) lines the 1-deoxy-D-xylulose 5-phosphate pocket. R17 is a 3-amino-2-oxopropyl phosphate binding site. The active-site Proton acceptor is the H42. 1-deoxy-D-xylulose 5-phosphate-binding residues include R44 and H49. E69 serves as the catalytic Proton acceptor. 1-deoxy-D-xylulose 5-phosphate is bound at residue T99. Residue H189 is the Proton donor of the active site. 3-amino-2-oxopropyl phosphate is bound by residues G190 and 211 to 212 (GH).

It belongs to the PNP synthase family. In terms of assembly, homooctamer; tetramer of dimers.

The protein resides in the cytoplasm. It catalyses the reaction 3-amino-2-oxopropyl phosphate + 1-deoxy-D-xylulose 5-phosphate = pyridoxine 5'-phosphate + phosphate + 2 H2O + H(+). The protein operates within cofactor biosynthesis; pyridoxine 5'-phosphate biosynthesis; pyridoxine 5'-phosphate from D-erythrose 4-phosphate: step 5/5. Catalyzes the complicated ring closure reaction between the two acyclic compounds 1-deoxy-D-xylulose-5-phosphate (DXP) and 3-amino-2-oxopropyl phosphate (1-amino-acetone-3-phosphate or AAP) to form pyridoxine 5'-phosphate (PNP) and inorganic phosphate. This Chlorobium chlorochromatii (strain CaD3) protein is Pyridoxine 5'-phosphate synthase.